The chain runs to 873 residues: MASLDLPYRCPRCGEHKRFRSLSSLRAHLEYSHTYETLYILSKTNSICDGAAAAAAAAAAASGFPLAPEPAALLAVPGARREVFESTSFQGKEQATGPSPAGPHLLHHHHHHAPLAHFPADLVPASLPCEELAEPGLVPAARYALREIEIPLGELFARKSVASSACSTPPPGPGPGPCSGPSSASPASPSPADVAYEEGLARLKIRALEKLEVDRRLERLSEEVEQKIAGQVGRLQAELERKAAELETARQESARLGREKEELEERASELSRQVDVSVELLASLKQDLVHKEQELSRKQQEVVQIDQFLKETAAREASAKLRLQQFIEELLERADRAERQLQVISSSCGSTPSASLGRGGGGSASGPGVRGPGRMREHHAGSAVPSTYAVSRHGSSPSTGASSRVPAASQSSGCYDSDSLELPRPEEGPSEDSGPGGLGSRAQATNGGSERSQAPRSSGLRRQAIQNWQRRPRRHSTEGEEGDVSDVGSRTTESEAEGPSDVPRPGPAVAGPLNSCRLSARPEGGSGRGRRVERGSPSRSNEVISPEILKMRAALFCIFTYLDTRTLLHAAEVCRDWRFVARHPAVWTRVLLENARVCSKFLAMLAQWCTQAHSLTLQNLKPRQRGKKESKEEYARSTRGCLEAGLESLLKAAGGNLLILRISHCPNILTDRSLWLASCYCRALQAVTYRSATDPVGHEVIWALGAGCRDIVSLQVAPLHPCQQPTRFSNRCLQMIGRCWPHLRALGVGGAGCGVQGLASLARNCMRLQVLELDHVSEITQEVAAEVCREGLKGLEMLVLTATPVTPKALLHFNSICRNLKSIVVQIGIADYFKEPSSPEAQKLFEDMVTKLQALRRRPGFSKILHIKVEGGC.

Positions E85–G97 are enriched in polar residues. Disordered regions lie at residues E85 to H110, S163 to D193, and S345 to S540. A compositionally biased stretch (pro residues) spans T168–C178. Residues S179 to A192 are compositionally biased toward low complexity. Residues A207–G349 adopt a coiled-coil conformation. Residues G357 to G371 show a composition bias toward gly residues. R358 carries the post-translational modification Omega-N-methylarginine. Composition is skewed to polar residues over residues V384–C414 and A442–R456. S476 carries the post-translational modification Phosphoserine. T477 is modified (phosphothreonine). In terms of domain architecture, F-box spans I548 to L592. S760 carries the post-translational modification Phosphoserine.

As to quaternary structure, directly interacts with SKP1 and CUL1.

Functionally, substrate-recognition component of the SCF (SKP1-CUL1-F-box protein)-type E3 ubiquitin ligase complex. The polypeptide is F-box only protein 41 (Fbxo41) (Mus musculus (Mouse)).